Reading from the N-terminus, the 448-residue chain is Probable glycine dehydrogenase (decarboxylating) subunit 1 (448 aa).

The protein belongs to the GcvP family. N-terminal subunit subfamily. As to quaternary structure, the glycine cleavage system is composed of four proteins: P, T, L and H. In this organism, the P 'protein' is a heterodimer of two subunits.

It catalyses the reaction N(6)-[(R)-lipoyl]-L-lysyl-[glycine-cleavage complex H protein] + glycine + H(+) = N(6)-[(R)-S(8)-aminomethyldihydrolipoyl]-L-lysyl-[glycine-cleavage complex H protein] + CO2. Functionally, the glycine cleavage system catalyzes the degradation of glycine. The P protein binds the alpha-amino group of glycine through its pyridoxal phosphate cofactor; CO(2) is released and the remaining methylamine moiety is then transferred to the lipoamide cofactor of the H protein. This chain is Probable glycine dehydrogenase (decarboxylating) subunit 1, found in Thermomicrobium roseum (strain ATCC 27502 / DSM 5159 / P-2).